The following is a 122-amino-acid chain: MRQRGRATLLVALLLLVQLRPESSQWSPAAAAANVVQDPNLRWNPGVRNQGGGVRALLLLLAERFPRRAGSEPAGERQRRDDPPLSIDLTFHLLRTLLELARTQSQRERAEQNRIIFDSVGK.

The first 25 residues, 1-25, serve as a signal peptide directing secretion; that stretch reads MRQRGRATLLVALLLLVQLRPESSQ. Positions 26-80 are excised as a propeptide; it reads WSPAAAAANVVQDPNLRWNPGVRNQGGGVRALLLLLAERFPRRAGSEPAGERQRR. At valine 120 the chain carries Valine amide.

It belongs to the sauvagine/corticotropin-releasing factor/urotensin I family. As to quaternary structure, interacts with CRHR1 and CRHR2 (via their N-terminal extracellular domain).

Its subcellular location is the secreted. Functionally, acts in vitro to stimulate the secretion of adrenocorticotropic hormone (ACTH). Binds with high affinity to CRF receptor types 1, 2-alpha, and 2-beta. Plays a role in the establishment of normal hearing thresholds. Reduces food intake and regulates ghrelin levels in gastric body and plasma. The polypeptide is Urocortin (Ucn) (Rattus norvegicus (Rat)).